Reading from the N-terminus, the 413-residue chain is Serine/threonine transporter SstT (413 aa).

Transmembrane regions (helical) follow at residues 15 to 35 (NIVIQILIGIIAGVALATLAP), 48 to 68 (FVSALKAVAPILVFILVAASI), 82 to 102 (VIVLYLVGTFCASLTAVVMSF), 141 to 161 (ALMTGNFIGILGWAVALGLGL), 178 to 198 (CISAIVTVVIRFAPIGIFGLV), 216 to 236 (LLAVLLGSMAFIALIVNPLIV), 290 to 310 (IPLGATINMAGAAITITVLTL), 330 to 350 (LVAAVSACGASGVAGGSLLLI), and 357 to 377 (FGISNDIAMQVVAIGFIIGVV).

The protein belongs to the dicarboxylate/amino acid:cation symporter (DAACS) (TC 2.A.23) family.

It localises to the cell inner membrane. The catalysed reaction is L-serine(in) + Na(+)(in) = L-serine(out) + Na(+)(out). It carries out the reaction L-threonine(in) + Na(+)(in) = L-threonine(out) + Na(+)(out). Functionally, involved in the import of serine and threonine into the cell, with the concomitant import of sodium (symport system). This chain is Serine/threonine transporter SstT, found in Aliivibrio fischeri (strain ATCC 700601 / ES114) (Vibrio fischeri).